A 153-amino-acid chain; its full sequence is S-ribosylhomocysteine lyase (153 aa).

Fe cation is bound by residues histidine 57, histidine 61, and cysteine 124.

This sequence belongs to the LuxS family. Homodimer. The cofactor is Fe cation.

The catalysed reaction is S-(5-deoxy-D-ribos-5-yl)-L-homocysteine = (S)-4,5-dihydroxypentane-2,3-dione + L-homocysteine. Functionally, involved in the synthesis of autoinducer 2 (AI-2) which is secreted by bacteria and is used to communicate both the cell density and the metabolic potential of the environment. The regulation of gene expression in response to changes in cell density is called quorum sensing. Catalyzes the transformation of S-ribosylhomocysteine (RHC) to homocysteine (HC) and 4,5-dihydroxy-2,3-pentadione (DPD). The polypeptide is S-ribosylhomocysteine lyase (Oceanobacillus iheyensis (strain DSM 14371 / CIP 107618 / JCM 11309 / KCTC 3954 / HTE831)).